The chain runs to 434 residues: Putative peptidase B (434 aa).

Residues Lys-198 and Asp-203 each coordinate Mn(2+). Residue Lys-210 is part of the active site. Residues Asp-221, Asp-280, and Glu-282 each contribute to the Mn(2+) site. The active site involves Arg-284.

The protein belongs to the peptidase M17 family. Homohexamer. Mn(2+) is required as a cofactor.

Its subcellular location is the cytoplasm. It catalyses the reaction Release of an N-terminal amino acid, Xaa, from a peptide or arylamide. Xaa is preferably Glu or Asp but may be other amino acids, including Leu, Met, His, Cys and Gln.. Its function is as follows. Probably plays an important role in intracellular peptide degradation. The protein is Putative peptidase B of Haemophilus influenzae (strain ATCC 51907 / DSM 11121 / KW20 / Rd).